The following is a 357-amino-acid chain: Elongation factor Ts (357 aa).

Residues 82–85 (TDFV) are involved in Mg(2+) ion dislocation from EF-Tu.

It belongs to the EF-Ts family.

The protein localises to the cytoplasm. Functionally, associates with the EF-Tu.GDP complex and induces the exchange of GDP to GTP. It remains bound to the aminoacyl-tRNA.EF-Tu.GTP complex up to the GTP hydrolysis stage on the ribosome. The chain is Elongation factor Ts from Campylobacter jejuni subsp. jejuni serotype O:6 (strain 81116 / NCTC 11828).